The sequence spans 284 residues: MSVQDTKAVEFSMGHIRSSSVSLVAEATSNTNSEDKLSKVQLYEDLCRYEDTLSKLVESVDRFKPNLDIAKDLIRTDEALFENVKLLAEYDNIYRNLQKIDKDSEELDSKTRKILEILNECHDELKALPMLEQVEFEKNTILQQRSKINSTELLDYATKLSKFTKIPPTFDKGAVGPNNFIWPAEDALRRGMLAMASLHSKELTRIPGEEVEETEVPTVPPSQSEEQKGQMAKKEGTPKTDSFIFDGTAKEVGDEADNTKDKEKEENNDDALDLDLDLFDPDDF.

Ser-2 carries the post-translational modification N-acetylserine. Residues Arg-205–Phe-284 form a disordered region. A compositionally biased stretch (basic and acidic residues) spans Glu-225 to Pro-238. Phosphothreonine; by KIN28 is present on Thr-237. Residue Ser-242 is modified to Phosphoserine. Positions Thr-248–Glu-265 are enriched in basic and acidic residues. Over residues Glu-266–Phe-284 the composition is skewed to acidic residues.

Belongs to the Mediator complex subunit 4 family. In terms of assembly, component of the Mediator complex, which is composed of at least 21 subunits that form three structurally distinct submodules. The Mediator head module contains MED6, MED8, MED11, SRB4/MED17, SRB5/MED18, ROX3/MED19, SRB2/MED20 and SRB6/MED22, the middle module contains MED1, MED4, NUT1/MED5, MED7, CSE2/MED9, NUT2/MED10, SRB7/MED21 and SOH1/MED31, and the tail module contains MED2, PGD1/MED3, RGR1/MED14, GAL11/MED15 and SIN4/MED16. The head and the middle modules interact directly with RNA polymerase II, whereas the elongated tail module interacts with gene-specific regulatory proteins. MED4 interacts directly with MED1, MED7 and SRB7/MED21.

The protein localises to the nucleus. In terms of biological role, component of the Mediator complex, a coactivator involved in the regulated transcription of nearly all RNA polymerase II-dependent genes. Mediator functions as a bridge to convey information from gene-specific regulatory proteins to the basal RNA polymerase II transcription machinery. The Mediator complex, having a compact conformation in its free form, is recruited to promoters by direct interactions with regulatory proteins and serves for the assembly of a functional preinitiation complex with RNA polymerase II and the general transcription factors. The Mediator complex unfolds to an extended conformation and partially surrounds RNA polymerase II, specifically interacting with the unphosphorylated form of the C-terminal domain (CTD) of RNA polymerase II. The Mediator complex dissociates from the RNA polymerase II holoenzyme and stays at the promoter when transcriptional elongation begins. The polypeptide is Mediator of RNA polymerase II transcription subunit 4 (MED4) (Saccharomyces cerevisiae (strain ATCC 204508 / S288c) (Baker's yeast)).